Consider the following 152-residue polypeptide: Histone deacetylase complex subunit SAP18 (152 aa).

The disordered stretch occupies residues 1 to 38 (MAEAARRQGGGRPLPPPPRGVNQQPPRPKPEPVDREKT). Positions 28-38 (PKPEPVDREKT) are enriched in basic and acidic residues.

The protein belongs to the SAP18 family. In terms of assembly, interacts with SIN3, ERF3, ERF4 and HDA19. Ubiquitous, with low level in flowers.

Functionally, links the histone deacetylase complex to transcriptional repressors bound to chromatin. Involved in the tethering of the SIN3 complex to core histone proteins. The protein is Histone deacetylase complex subunit SAP18 of Arabidopsis thaliana (Mouse-ear cress).